A 113-amino-acid chain; its full sequence is U11-theraphotoxin-Hhn1a (113 aa).

A signal peptide spans 1-21; the sequence is MDTVRVAFLLVLVLAVSLGQA. A propeptide spanning residues 22 to 74 is cleaved from the precursor; it reads DKDENRMEMQEKTEQGKSYLDFAENLLLQKLEELEAKLLEEDSEESRNSRQKR. The span at 60–69 shows a compositional bias: basic and acidic residues; that stretch reads LEEDSEESRN. Residues 60–83 form a disordered region; it reads LEEDSEESRNSRQKRCIGEGVPCD. 3 disulfides stabilise this stretch: Cys-75–Cys-90, Cys-82–Cys-95, and Cys-89–Cys-110.

The protein belongs to the neurotoxin 14 (magi-1) family. 01 (HNTX-16) subfamily. In terms of tissue distribution, expressed by the venom gland.

It localises to the secreted. Functionally, probable ion channel inhibitor. The polypeptide is U11-theraphotoxin-Hhn1a (Cyriopagopus hainanus (Chinese bird spider)).